A 213-amino-acid polypeptide reads, in one-letter code: Glutathione S-transferase PARB (213 aa).

The GST N-terminal domain occupies 1 to 82 (MAIKVHGSPM…YIAHVYADNG (82 aa)). Residues Ser-11, 12-13 (TA), 40-41 (HK), 53-54 (QV), and 66-67 (ES) contribute to the glutathione site. In terms of domain architecture, GST C-terminal spans 89–213 (DPKKMPSMSV…WVKGLEKLQK (125 aa)).

This sequence belongs to the GST superfamily. Phi family.

It carries out the reaction RX + glutathione = an S-substituted glutathione + a halide anion + H(+). Functionally, conjugation of reduced glutathione to a wide number of exogenous and endogenous hydrophobic electrophiles. This chain is Glutathione S-transferase PARB, found in Nicotiana tabacum (Common tobacco).